We begin with the raw amino-acid sequence, 485 residues long: Envelope glycoprotein C (485 aa).

An N-terminal signal peptide occupies residues 1–32 (MGLVNIMRFITFAYIICGGFILTRTSGTSASA). Positions 28 to 72 (TSASASPATPTTNTGEGTSSPVTPTYTTSTDSNNSTATNNSTDVN) are enriched in low complexity. A disordered region spans residues 28 to 88 (TSASASPATP…TPSHPHSHEN (61 aa)). The Virion surface segment spans residues 33–444 (SPATPTTNTG…DASPIVEDMP (412 aa)). 11 N-linked (GlcNAc...) asparagine; by host glycosylation sites follow: Asn60, Asn61, Asn66, Asn67, Asn72, Asn108, Asn116, Asn147, Asn220, Asn225, and Asn286. Cys92 and Cys109 are oxidised to a cystine. The Ig-like domain maps to 237–330 (PLMDLSVHPS…EWYRDEVSFS (94 aa)). Disulfide bonds link Cys256/Cys318, Cys357/Cys416, and Cys361/Cys390. A helical transmembrane segment spans residues 445-468 (VLTGIIAVTCGAAALALVVLITAV). Topologically, residues 469 to 485 (CFYCSKPSQVPYKKADF) are cytoplasmic.

It belongs to the herpesviridae glycoprotein C family. As to quaternary structure, interacts with host complement component C3; this interaction inhibits host immune response by disregulating complement cascade.

Its subcellular location is the virion membrane. Essential for the initial attachment to heparan sulfate moieties of the host cell surface proteoglycans. Also plays a role in host immune evasion by inhibiting the host complement cascade activation. The chain is Envelope glycoprotein C (gC) from Equine herpesvirus 4 (strain 1942) (EHV-4).